A 285-amino-acid polypeptide reads, in one-letter code: 4-diphosphocytidyl-2-C-methyl-D-erythritol kinase (285 aa).

Lys12 is a catalytic residue. Residue 95 to 105 (PMGGGVGGGSS) participates in ATP binding. The active site involves Asp137.

This sequence belongs to the GHMP kinase family. IspE subfamily.

It catalyses the reaction 4-CDP-2-C-methyl-D-erythritol + ATP = 4-CDP-2-C-methyl-D-erythritol 2-phosphate + ADP + H(+). It functions in the pathway isoprenoid biosynthesis; isopentenyl diphosphate biosynthesis via DXP pathway; isopentenyl diphosphate from 1-deoxy-D-xylulose 5-phosphate: step 3/6. Functionally, catalyzes the phosphorylation of the position 2 hydroxy group of 4-diphosphocytidyl-2C-methyl-D-erythritol. In Actinobacillus pleuropneumoniae serotype 5b (strain L20), this protein is 4-diphosphocytidyl-2-C-methyl-D-erythritol kinase.